The chain runs to 865 residues: Probable alpha/beta-glucosidase ARB_02101 (865 aa).

The N-terminal stretch at 1–21 (MFGRTLALAAVFATTVLSAAA) is a signal peptide. Asn-101 and Asn-299 each carry an N-linked (GlcNAc...) asparagine glycan. Asp-428 (nucleophile) is an active-site residue. Residue Glu-431 is part of the active site. N-linked (GlcNAc...) asparagine glycosylation is present at Asn-515. The Proton donor role is filled by Asp-548. N-linked (GlcNAc...) asparagine glycans are attached at residues Asn-549, Asn-585, and Asn-748.

Belongs to the glycosyl hydrolase 31 family.

It localises to the secreted. It catalyses the reaction Hydrolysis of terminal, non-reducing (1-&gt;4)-linked alpha-D-glucose residues with release of alpha-D-glucose.. The catalysed reaction is Hydrolysis of terminal, non-reducing beta-D-glucosyl residues with release of beta-D-glucose.. In terms of biological role, glucosidase involved in the degradation of cellulosic biomass. Has both alpha- and beta-glucosidase activity. This Arthroderma benhamiae (strain ATCC MYA-4681 / CBS 112371) (Trichophyton mentagrophytes) protein is Probable alpha/beta-glucosidase ARB_02101.